Consider the following 184-residue polypeptide: Bifunctional protein PyrR (184 aa).

The PRPP-binding signature appears at 99-111 (IVLVDDVLYTGRT).

This sequence belongs to the purine/pyrimidine phosphoribosyltransferase family. PyrR subfamily. As to quaternary structure, homodimer and homohexamer; in equilibrium.

The catalysed reaction is UMP + diphosphate = 5-phospho-alpha-D-ribose 1-diphosphate + uracil. Its function is as follows. Regulates transcriptional attenuation of the pyrimidine nucleotide (pyr) operon by binding in a uridine-dependent manner to specific sites on pyr mRNA. This disrupts an antiterminator hairpin in the RNA and favors formation of a downstream transcription terminator, leading to a reduced expression of downstream genes. In terms of biological role, also displays a weak uracil phosphoribosyltransferase activity which is not physiologically significant. The sequence is that of Bifunctional protein PyrR from Acetivibrio thermocellus (strain ATCC 27405 / DSM 1237 / JCM 9322 / NBRC 103400 / NCIMB 10682 / NRRL B-4536 / VPI 7372) (Clostridium thermocellum).